The primary structure comprises 547 residues: Methionine--tRNA ligase (547 aa).

A 'HIGH' region motif is present at residues 13-23; it reads PYANGPLHIGH. The Zn(2+) site is built by C145, C148, C158, and C161. A 'KMSKS' region motif is present at residues 334–338; the sequence is QFSKS. An ATP-binding site is contributed by K337.

This sequence belongs to the class-I aminoacyl-tRNA synthetase family. MetG type 1 subfamily. It depends on Zn(2+) as a cofactor.

It is found in the cytoplasm. It catalyses the reaction tRNA(Met) + L-methionine + ATP = L-methionyl-tRNA(Met) + AMP + diphosphate. Is required not only for elongation of protein synthesis but also for the initiation of all mRNA translation through initiator tRNA(fMet) aminoacylation. This Thermoplasma acidophilum (strain ATCC 25905 / DSM 1728 / JCM 9062 / NBRC 15155 / AMRC-C165) protein is Methionine--tRNA ligase.